We begin with the raw amino-acid sequence, 846 residues long: Protein kintoun (846 aa).

4 disordered regions span residues 1–21 (MSTA…ERAD), 372–416 (YLSR…PALT), 581–657 (HTSI…DSTI), and 743–846 (HDSS…DDEI). Ser378 is modified (phosphoserine). A compositionally biased stretch (acidic residues) spans 389-403 (PVEDDADGDMPETPE). Basic residues-rich tracts occupy residues 596–612 (LHKK…KKQR) and 750–766 (QRKK…RAQQ). Ser770 is subject to Phosphoserine. Over residues 821-832 (TRQDHADADAKN) the composition is skewed to basic and acidic residues.

This sequence belongs to the PIH1 family. Kintoun subfamily. As to quaternary structure, interacts with Pp1alpha-96A, Pp1-87B, Pp1-13C and flw.

The protein localises to the cytoplasm. Required for cytoplasmic pre-assembly of axonemal dyneins, thereby playing a central role in motility in cilia and flagella. Involved in pre-assembly of dynein arm complexes in the cytoplasm before intraflagellar transport loads them for the ciliary compartment. The sequence is that of Protein kintoun from Drosophila persimilis (Fruit fly).